The following is a 369-amino-acid chain: Peptidyl-prolyl cis-trans isomerase D (369 aa).

The region spanning 7–175 (YFDISCNGKP…EDWKIADCGE (169 aa)) is the PPIase cyclophilin-type domain. TPR repeat units follow at residues 217–250 (VSKI…LNDY), 268–301 (LSCY…EQID), and 306–339 (TKAL…EPND).

Belongs to the cyclophilin-type PPIase family. PPIase D subfamily.

The protein localises to the cytoplasm. It carries out the reaction [protein]-peptidylproline (omega=180) = [protein]-peptidylproline (omega=0). PPIases accelerate the folding of proteins. It catalyzes the cis-trans isomerization of proline imidic peptide bonds in oligopeptides. The chain is Peptidyl-prolyl cis-trans isomerase D (CPR6) from Candida albicans (strain SC5314 / ATCC MYA-2876) (Yeast).